Consider the following 210-residue polypeptide: MDNDKYLKGTTTVGVVCTDGIVLASEQRATMGHFIASKTAKKVYQIDDLVGMTTAGSVGDAQQLVRLVSVESQLYKMRRNESMTIKGIATLMSNFLNANRYYPMMVQLLIGGVDKNGPAIYSLDPMGGSIEETRISATGSGSPMAYGVLEDQYREDIAVKEGLDLAIRAIHNATKRDSASGENIDVVVITKEAFKRLDPEEVKSRRALLN.

Positions 1–9 are cleaved as a propeptide — removed in mature form; by autocatalysis; that stretch reads MDNDKYLKG. The Nucleophile role is filled by Thr10.

Belongs to the peptidase T1B family. The 20S proteasome core is composed of 14 alpha and 14 beta subunits that assemble into four stacked heptameric rings, resulting in a barrel-shaped structure. The two inner rings, each composed of seven catalytic beta subunits, are sandwiched by two outer rings, each composed of seven alpha subunits. The catalytic chamber with the active sites is on the inside of the barrel. Has a gated structure, the ends of the cylinder being occluded by the N-termini of the alpha-subunits. Is capped at one or both ends by the proteasome regulatory ATPase, PAN.

Its subcellular location is the cytoplasm. It carries out the reaction Cleavage of peptide bonds with very broad specificity.. With respect to regulation, the formation of the proteasomal ATPase PAN-20S proteasome complex, via the docking of the C-termini of PAN into the intersubunit pockets in the alpha-rings, triggers opening of the gate for substrate entry. Interconversion between the open-gate and close-gate conformations leads to a dynamic regulation of the 20S proteasome proteolysis activity. In terms of biological role, component of the proteasome core, a large protease complex with broad specificity involved in protein degradation. This is Proteasome subunit beta from Methanosarcina mazei (strain ATCC BAA-159 / DSM 3647 / Goe1 / Go1 / JCM 11833 / OCM 88) (Methanosarcina frisia).